Consider the following 143-residue polypeptide: Large ribosomal subunit protein uL11 (143 aa).

Belongs to the universal ribosomal protein uL11 family. As to quaternary structure, part of the ribosomal stalk of the 50S ribosomal subunit. Interacts with L10 and the large rRNA to form the base of the stalk. L10 forms an elongated spine to which L12 dimers bind in a sequential fashion forming a multimeric L10(L12)X complex. Post-translationally, one or more lysine residues are methylated.

Its function is as follows. Forms part of the ribosomal stalk which helps the ribosome interact with GTP-bound translation factors. This is Large ribosomal subunit protein uL11 from Paraburkholderia phytofirmans (strain DSM 17436 / LMG 22146 / PsJN) (Burkholderia phytofirmans).